Reading from the N-terminus, the 165-residue chain is Lipoprotein signal peptidase (165 aa).

2 helical membrane passes run 68 to 88 and 100 to 120; these read PLLP…GLFG and GFLL…GEVI. Residues Asp-121 and Asp-137 contribute to the active site. A helical transmembrane segment spans residues 130–150; it reads FPVFNIADISINVGLACLIFA.

Belongs to the peptidase A8 family.

It is found in the cell inner membrane. The enzyme catalyses Release of signal peptides from bacterial membrane prolipoproteins. Hydrolyzes -Xaa-Yaa-Zaa-|-(S,diacylglyceryl)Cys-, in which Xaa is hydrophobic (preferably Leu), and Yaa (Ala or Ser) and Zaa (Gly or Ala) have small, neutral side chains.. Its pathway is protein modification; lipoprotein biosynthesis (signal peptide cleavage). Its function is as follows. This protein specifically catalyzes the removal of signal peptides from prolipoproteins. In Acaryochloris marina (strain MBIC 11017), this protein is Lipoprotein signal peptidase.